A 385-amino-acid polypeptide reads, in one-letter code: Putative ribosomal RNA large subunit methyltransferase MJ1653 (385 aa).

Residues 2 to 81 (TTKLYVDFGG…LDENYIREKI (80 aa)) enclose the PUA domain.

This sequence belongs to the methyltransferase superfamily. RlmI family.

The protein resides in the cytoplasm. This chain is Putative ribosomal RNA large subunit methyltransferase MJ1653, found in Methanocaldococcus jannaschii (strain ATCC 43067 / DSM 2661 / JAL-1 / JCM 10045 / NBRC 100440) (Methanococcus jannaschii).